The following is an 88-amino-acid chain: Small ribosomal subunit protein uS15c (88 aa).

This sequence belongs to the universal ribosomal protein uS15 family. In terms of assembly, part of the 30S ribosomal subunit.

It is found in the plastid. Its subcellular location is the chloroplast. This Barbarea verna (Land cress) protein is Small ribosomal subunit protein uS15c (rps15).